The primary structure comprises 905 residues: Catenin alpha-2 (905 aa).

Position 632 is a phosphothreonine (Thr632). 3 positions are modified to phosphoserine: Ser640, Ser651, and Ser853. A compositionally biased stretch (basic and acidic residues) spans 869 to 879; that stretch reads VKREKPEEFQT. Residues 869–891 form a disordered region; it reads VKREKPEEFQTRVRRGSQKKHIS. A compositionally biased stretch (basic residues) spans 880–890; sequence RVRRGSQKKHI. Ser891 is modified (phosphoserine).

The protein belongs to the vinculin/alpha-catenin family. In terms of assembly, interacts with CDH1 and CDH2. Interacts with ZNF639; recruits CTNNA2 to the nucleus. Interacts with F-actin.

It localises to the cell membrane. The protein localises to the cytoplasm. It is found in the cytoskeleton. The protein resides in the cell junction. Its subcellular location is the adherens junction. It localises to the cell projection. The protein localises to the axon. It is found in the nucleus. Its function is as follows. May function as a linker between cadherin adhesion receptors and the cytoskeleton to regulate cell-cell adhesion and differentiation in the nervous system. Required for proper regulation of cortical neuronal migration and neurite growth. It acts as a negative regulator of Arp2/3 complex activity and Arp2/3-mediated actin polymerization. It thereby suppresses excessive actin branching which would impair neurite growth and stability. Regulates morphological plasticity of synapses and cerebellar and hippocampal lamination during development. Functions in the control of startle modulation. This Pongo abelii (Sumatran orangutan) protein is Catenin alpha-2 (CTNNA2).